Here is a 262-residue protein sequence, read N- to C-terminus: 14-3-3 protein epsilon (262 aa).

The tract at residues 236–262 (QAEEVDPNAGDGEPKEQIQDVEDQDVS) is disordered. A Phosphoserine modification is found at S262.

The protein belongs to the 14-3-3 family. In terms of assembly, homodimer. Interacts with phosphorylated yki. Interacts with pav (when serine phosphorylated); the interaction is necessary for association of the complex pav-14-3-3epsilon complex to the microtubules, thereby inhibiting microtubule sliding.

In terms of biological role, positively regulates Ras-mediated pathways. Acts downstream or parallel to Raf, but upstream of nuclear factors in Ras signaling. Three mutants have been isolated, that suppress the rough eye phenotype caused by mutated Ras1 (sev-Ras1 v12). Inhibits yki activity by restricting its nuclear localization. Together with pav, has a role in the inhibition of microtubule sliding during neurite outgrowth. This Drosophila melanogaster (Fruit fly) protein is 14-3-3 protein epsilon (14-3-3epsilon).